A 513-amino-acid chain; its full sequence is Maturase K (513 aa).

Belongs to the intron maturase 2 family. MatK subfamily.

Its subcellular location is the plastid. It localises to the chloroplast. Its function is as follows. Usually encoded in the trnK tRNA gene intron. Probably assists in splicing its own and other chloroplast group II introns. The sequence is that of Maturase K from Sporobolus indicus (Smut grass).